We begin with the raw amino-acid sequence, 85 residues long: Large ribosomal subunit protein bL27 (85 aa).

The segment at 1–21 (MAHKKAGGSTRNGRDSNAKRL) is disordered.

It belongs to the bacterial ribosomal protein bL27 family.

This is Large ribosomal subunit protein bL27 from Erwinia tasmaniensis (strain DSM 17950 / CFBP 7177 / CIP 109463 / NCPPB 4357 / Et1/99).